A 224-amino-acid polypeptide reads, in one-letter code: 7-cyano-7-deazaguanine synthase (224 aa).

9–19 (LSGGLDSATVL) is an ATP binding site. Zn(2+) contacts are provided by Cys189, Cys199, Cys202, and Cys205.

This sequence belongs to the QueC family. Zn(2+) is required as a cofactor.

The catalysed reaction is 7-carboxy-7-deazaguanine + NH4(+) + ATP = 7-cyano-7-deazaguanine + ADP + phosphate + H2O + H(+). It functions in the pathway purine metabolism; 7-cyano-7-deazaguanine biosynthesis. In terms of biological role, catalyzes the ATP-dependent conversion of 7-carboxy-7-deazaguanine (CDG) to 7-cyano-7-deazaguanine (preQ(0)). In Ralstonia nicotianae (strain ATCC BAA-1114 / GMI1000) (Ralstonia solanacearum), this protein is 7-cyano-7-deazaguanine synthase.